The chain runs to 468 residues: N-acetyltransferase SLI1 (468 aa).

It localises to the endoplasmic reticulum. Its function is as follows. Confers resistance to the sphingolipid biosynthesis inhibitor drug myriocin (ISP-1). Inactivates ISP-1 by converting it into N-acetyl-myriocin. Cooperates with YPK1 in mediating resistance to myriocin. The chain is N-acetyltransferase SLI1 (SLI1) from Saccharomyces cerevisiae (strain ATCC 204508 / S288c) (Baker's yeast).